Reading from the N-terminus, the 414-residue chain is Putative competence-damage inducible protein (414 aa).

The protein belongs to the CinA family.

The chain is Putative competence-damage inducible protein from Limosilactobacillus fermentum (strain NBRC 3956 / LMG 18251) (Lactobacillus fermentum).